Consider the following 194-residue polypeptide: Imidazoleglycerol-phosphate dehydratase (194 aa).

Belongs to the imidazoleglycerol-phosphate dehydratase family.

The protein localises to the cytoplasm. The enzyme catalyses D-erythro-1-(imidazol-4-yl)glycerol 3-phosphate = 3-(imidazol-4-yl)-2-oxopropyl phosphate + H2O. It functions in the pathway amino-acid biosynthesis; L-histidine biosynthesis; L-histidine from 5-phospho-alpha-D-ribose 1-diphosphate: step 6/9. The sequence is that of Imidazoleglycerol-phosphate dehydratase from Listeria monocytogenes serotype 4a (strain HCC23).